The primary structure comprises 353 residues: Photosystem II D2 protein (353 aa).

Position 2 is an N-acetylthreonine (Thr-2). Thr-2 is modified (phosphothreonine). Residues 41–61 form a helical membrane-spanning segment; sequence CAYFALGGWFTGTTFVTSWYT. Residue His-118 coordinates chlorophyll a. The helical transmembrane segment at 125-141 threads the bilayer; the sequence is GFMLRQFELSRSVQLRP. Pheophytin a-binding residues include Gln-130 and Asn-143. The helical transmembrane segment at 153-166 threads the bilayer; that stretch reads VFVSVFLIYPLGQS. Chlorophyll a is bound at residue His-198. The chain crosses the membrane as a helical span at residues 208–228; that stretch reads AALLCAIHGATVENTLFEDGD. A plastoquinone is bound by residues His-215 and Phe-262. Residue His-215 coordinates Fe cation. His-269 provides a ligand contact to Fe cation. The helical transmembrane segment at 279–295 threads the bilayer; the sequence is GLWMSALGVVGLALNLR.

Belongs to the reaction center PufL/M/PsbA/D family. As to quaternary structure, PSII is composed of 1 copy each of membrane proteins PsbA, PsbB, PsbC, PsbD, PsbE, PsbF, PsbH, PsbI, PsbJ, PsbK, PsbL, PsbM, PsbT, PsbX, PsbY, PsbZ, Psb30/Ycf12, at least 3 peripheral proteins of the oxygen-evolving complex and a large number of cofactors. It forms dimeric complexes. The D1/D2 heterodimer binds P680, chlorophylls that are the primary electron donor of PSII, and subsequent electron acceptors. It shares a non-heme iron and each subunit binds pheophytin, quinone, additional chlorophylls, carotenoids and lipids. There is also a Cl(-1) ion associated with D1 and D2, which is required for oxygen evolution. The PSII complex binds additional chlorophylls, carotenoids and specific lipids. is required as a cofactor.

It is found in the plastid. Its subcellular location is the chloroplast thylakoid membrane. The enzyme catalyses 2 a plastoquinone + 4 hnu + 2 H2O = 2 a plastoquinol + O2. In terms of biological role, photosystem II (PSII) is a light-driven water:plastoquinone oxidoreductase that uses light energy to abstract electrons from H(2)O, generating O(2) and a proton gradient subsequently used for ATP formation. It consists of a core antenna complex that captures photons, and an electron transfer chain that converts photonic excitation into a charge separation. The D1/D2 (PsbA/PsbD) reaction center heterodimer binds P680, the primary electron donor of PSII as well as several subsequent electron acceptors. D2 is needed for assembly of a stable PSII complex. The polypeptide is Photosystem II D2 protein (Arabis hirsuta (Hairy rock-cress)).